We begin with the raw amino-acid sequence, 483 residues long: Glutamate--tRNA ligase (483 aa).

Residues 9–19 (PSPTGYLHIGN) carry the 'HIGH' region motif. Residues 250-254 (KLSKR) carry the 'KMSKS' region motif. An ATP-binding site is contributed by Lys-253.

This sequence belongs to the class-I aminoacyl-tRNA synthetase family. Glutamate--tRNA ligase type 1 subfamily. As to quaternary structure, monomer.

It is found in the cytoplasm. The catalysed reaction is tRNA(Glu) + L-glutamate + ATP = L-glutamyl-tRNA(Glu) + AMP + diphosphate. Its function is as follows. Catalyzes the attachment of glutamate to tRNA(Glu) in a two-step reaction: glutamate is first activated by ATP to form Glu-AMP and then transferred to the acceptor end of tRNA(Glu). The sequence is that of Glutamate--tRNA ligase from Blochmanniella floridana.